A 247-amino-acid polypeptide reads, in one-letter code: Retbindin (247 aa).

An N-terminal signal peptide occupies residues 1 to 31; the sequence is MAHEGHSQHSGLVWALRPILAWIFLVACGWS. Intrachain disulfides connect Cys-99–Cys-169, Cys-106–Cys-146, Cys-139–Cys-183, and Cys-152–Cys-165.

The protein belongs to the folate receptor family. Post-translationally, not N-glycosylated. Expressed in the peripheral retina where it localizes to the inter-photoreceptor matrix (at protein level). May be produced by rod photoreceptors (at protein level).

It localises to the secreted. Its subcellular location is the extracellular space. It is found in the extracellular matrix. The protein resides in the interphotoreceptor matrix. The protein localises to the cell membrane. In terms of biological role, riboflavin-binding protein which might have a role in retinal flavin transport. The chain is Retbindin (Rtbdn) from Mus musculus (Mouse).